The sequence spans 99 residues: Aspartyl/glutamyl-tRNA(Asn/Gln) amidotransferase subunit C (99 aa).

This sequence belongs to the GatC family. Heterotrimer of A, B and C subunits.

The enzyme catalyses L-glutamyl-tRNA(Gln) + L-glutamine + ATP + H2O = L-glutaminyl-tRNA(Gln) + L-glutamate + ADP + phosphate + H(+). The catalysed reaction is L-aspartyl-tRNA(Asn) + L-glutamine + ATP + H2O = L-asparaginyl-tRNA(Asn) + L-glutamate + ADP + phosphate + 2 H(+). In terms of biological role, allows the formation of correctly charged Asn-tRNA(Asn) or Gln-tRNA(Gln) through the transamidation of misacylated Asp-tRNA(Asn) or Glu-tRNA(Gln) in organisms which lack either or both of asparaginyl-tRNA or glutaminyl-tRNA synthetases. The reaction takes place in the presence of glutamine and ATP through an activated phospho-Asp-tRNA(Asn) or phospho-Glu-tRNA(Gln). The sequence is that of Aspartyl/glutamyl-tRNA(Asn/Gln) amidotransferase subunit C from Burkholderia cenocepacia (strain ATCC BAA-245 / DSM 16553 / LMG 16656 / NCTC 13227 / J2315 / CF5610) (Burkholderia cepacia (strain J2315)).